The sequence spans 384 residues: Troponin T (384 aa).

The span at 1-15 shows a compositional bias: acidic residues; it reads MSDEEEYSEEEEEVP. Disordered stretches follow at residues 1–23, 61–169, 237–257, and 313–384; these read MSDEEEYSEEEEEVPVDTKPRHS, RAKE…KEQL, LRHKALKKGLDPEALTGKYPP, and PKWF…EEEE. Basic and acidic residues-rich tracts occupy residues 61 to 74 and 81 to 126; these read RAKEEEDLKKLKDK and MRAD…EKKR. Residues 316-327 are compositionally biased toward basic and acidic residues; sequence FGERPGKKKGDP. A compositionally biased stretch (acidic residues) spans 328 to 384; the sequence is ESPEEEEVKADAGVDDELEEPTFEPEPEPEPEEEAAEEEAEEEEEEEEEEEEEEEEE.

It belongs to the troponin T family.

Troponin T is the tropomyosin-binding subunit of troponin, the thin filament regulatory complex which confers calcium-sensitivity to striated muscle actomyosin ATPase activity. This is Troponin T (TNT) from Periplaneta americana (American cockroach).